A 326-amino-acid polypeptide reads, in one-letter code: MIVPTYGDVLDASNRIKEYVNKTPVLTSRMLNDRLGAQIYFKGENFQRVGAFKFRGAMNAVSKLSDEKRSKGVIAFSSGNHAQAIALSAKLLNVPATIVMPEDAPALKVAATAGYGAHIIRYNRYTEDREQIGRQLAAEHGFALIPPYDHPDVIAGQGTSAKELLEEVGQLDALFVPLGGGGLLSGSALAARSLSPGCKIFGVEPEAGNDGQQSFRSGSIVHINTPKTIADGAQTQHLGEYTFAIIRENVDDILTVSDQELVKCMHFLAERMKVVVEPTACLGFAGALLKKEELVGKKVGIILSGGNVDMKRYATLISGKEDGPTI.

Lys-53 is subject to N6-(pyridoxal phosphate)lysine. Residues Asn-80, 179 to 183 (GGGGL), and Ser-304 each bind pyridoxal 5'-phosphate.

The protein belongs to the serine/threonine dehydratase family. In terms of assembly, monomer. Pyridoxal 5'-phosphate is required as a cofactor. Requires Mn(2+) as cofactor. Mg(2+) serves as cofactor. It depends on Ca(2+) as a cofactor.

It catalyses the reaction (3S)-3-hydroxy-L-aspartate = oxaloacetate + NH4(+). Its activity is regulated as follows. Is strongly inhibited by hydroxylamine and EDTA in vitro. Functionally, catalyzes the deamination of L-threo-3-hydroxyaspartate to oxaloacetate and ammonia. Shows a high specificity towards L-threo-3-hydroxyaspartate as other 3-hydroxyaminoacids, i.e. D,L-erythro- and D-threo-3-hydroxyaspartate, D-threonine, L-threonine, D,L-allothreonine, D-serine, and L-serine, are not substrates for this enzyme. Exhibits no detectable serine racemase activity. Is responsible for the 3-hydroxyaspartate resistance of S.cerevisiae, and thus may be involved in the detoxification of naturally occurring 3-hydroxyaspartate. The polypeptide is L-threo-3-hydroxyaspartate ammonia-lyase (SRY1) (Saccharomyces cerevisiae (strain ATCC 204508 / S288c) (Baker's yeast)).